Consider the following 327-residue polypeptide: DNA-directed RNA polymerase subunit alpha (327 aa).

The alpha N-terminal domain (alpha-NTD) stretch occupies residues 1–233 (MVREKVKVST…NLFIPFLHVE (233 aa)). An alpha C-terminal domain (alpha-CTD) region spans residues 267-327 (LAFQYIFIDQ…KKILDILEKK (61 aa)).

This sequence belongs to the RNA polymerase alpha chain family. In terms of assembly, in plastids the minimal PEP RNA polymerase catalytic core is composed of four subunits: alpha, beta, beta', and beta''. When a (nuclear-encoded) sigma factor is associated with the core the holoenzyme is formed, which can initiate transcription.

The protein localises to the plastid. It is found in the chloroplast. The enzyme catalyses RNA(n) + a ribonucleoside 5'-triphosphate = RNA(n+1) + diphosphate. Functionally, DNA-dependent RNA polymerase catalyzes the transcription of DNA into RNA using the four ribonucleoside triphosphates as substrates. This Draba nemorosa (Woodland whitlowgrass) protein is DNA-directed RNA polymerase subunit alpha.